Reading from the N-terminus, the 911-residue chain is Protein argonaute 4B (911 aa).

Disordered regions lie at residues 1–51 and 149–171; these read MDAH…RPGL and KTAANGSPGGNDSPGGSDRKRVR. One can recognise a PAZ domain in the interval 281 to 396; it reads PVIDFLLANQ…FPIELCSLIP (116 aa). The Piwi domain maps to 565-872; it reads FLLCLLPERK…AAAQVGTFLK (308 aa).

Belongs to the argonaute family. Ago subfamily.

Probably involved in the RNA silencing pathway. May bind to short RNAs such as microRNAs (miRNAs) or short interfering RNAs (siRNAs), and represses the translation of mRNAs which are complementary to them. This is Protein argonaute 4B (AGO4B) from Oryza sativa subsp. japonica (Rice).